We begin with the raw amino-acid sequence, 154 residues long: Endoribonuclease YbeY (154 aa).

Zn(2+) is bound by residues His116, His120, and His126.

This sequence belongs to the endoribonuclease YbeY family. Requires Zn(2+) as cofactor.

It is found in the cytoplasm. Functionally, single strand-specific metallo-endoribonuclease involved in late-stage 70S ribosome quality control and in maturation of the 3' terminus of the 16S rRNA. The protein is Endoribonuclease YbeY of Buchnera aphidicola subsp. Baizongia pistaciae (strain Bp).